Consider the following 512-residue polypeptide: Retinaldehyde dehydrogenase 3 (512 aa).

Positions 1-23 (MATANGAVENGQPDGKPPALPRP) are disordered. Residue alanine 2 is modified to N-acetylalanine. Residues lysine 204, glutamate 207, and 257–262 (GSTEVG) each bind NAD(+). Glutamate 280 (proton acceptor) is an active-site residue. The active-site Nucleophile is the cysteine 314. Glutamine 361 and glutamate 411 together coordinate NAD(+).

The protein belongs to the aldehyde dehydrogenase family. In terms of assembly, homotetramer.

Its subcellular location is the cytoplasm. The enzyme catalyses all-trans-retinal + NAD(+) + H2O = all-trans-retinoate + NADH + 2 H(+). The catalysed reaction is retinal + NAD(+) + H2O = retinoate + NADH + 2 H(+). It carries out the reaction all-trans-13,14-dihydroretinal + NAD(+) + H2O = all-trans-13,14-dihydroretinoate + NADH + 2 H(+). It functions in the pathway cofactor metabolism; retinol metabolism. Functionally, catalyzes the NAD-dependent oxidation of aldehyde substrates, such as all-trans-retinal and all-trans-13,14-dihydroretinal, to their corresponding carboxylic acids, all-trans-retinoate and all-trans-13,14-dihydroretinoate, respectively. High specificity for all-trans-retinal as substrate, can also accept acetaldehyde as substrate in vitro but with lower affinity. Required for the biosynthesis of normal levels of retinoate in the embryonic ocular and nasal regions; a critical lipid in the embryonic development of the eye and the nasal region. The chain is Retinaldehyde dehydrogenase 3 (Aldh1a3) from Rattus norvegicus (Rat).